A 438-amino-acid chain; its full sequence is Phosphoribosylamine--glycine ligase (438 aa).

The region spanning 108–316 is the ATP-grasp domain; the sequence is REFMERNNIP…LLEIAKGIVE (209 aa). 135-194 is an ATP binding site; sequence IDEYGKPVVVKPLGLTGGKGVKVVGYQLKDNEEAKEYAEHIIRKDGKVLIEERTDGVEFT. Mg(2+) is bound by residues glutamine 274, glutamate 286, and asparagine 288. Positions 274, 286, and 288 each coordinate Mn(2+).

This sequence belongs to the GARS family. Mg(2+) is required as a cofactor. Requires Mn(2+) as cofactor.

It carries out the reaction 5-phospho-beta-D-ribosylamine + glycine + ATP = N(1)-(5-phospho-beta-D-ribosyl)glycinamide + ADP + phosphate + H(+). It functions in the pathway purine metabolism; IMP biosynthesis via de novo pathway; N(1)-(5-phospho-D-ribosyl)glycinamide from 5-phospho-alpha-D-ribose 1-diphosphate: step 2/2. In Pyrococcus horikoshii (strain ATCC 700860 / DSM 12428 / JCM 9974 / NBRC 100139 / OT-3), this protein is Phosphoribosylamine--glycine ligase.